A 392-amino-acid chain; its full sequence is Alaserpin (392 aa).

Residues 1-16 (MKIIMCIFGLAALAMA) form the signal peptide. N-linked (GlcNAc...) asparagine glycosylation is present at N85.

The protein belongs to the serpin family. In terms of tissue distribution, hemolymph.

Its subcellular location is the secreted. The protein resides in the extracellular space. Its function is as follows. Inhibits elastase. This Manduca sexta (Tobacco hawkmoth) protein is Alaserpin.